Reading from the N-terminus, the 370-residue chain is uncharacterized protein (370 aa).

Residue lysine 207 is modified to N6-(pyridoxal phosphate)lysine.

The protein belongs to the class-V pyridoxal-phosphate-dependent aminotransferase family. The cofactor is pyridoxal 5'-phosphate.

This is an uncharacterized protein from Bacillus subtilis (strain 168).